The primary structure comprises 155 residues: uncharacterized protein (155 aa).

A disordered region spans residues 135–155 (SQANSKNDSNSKDDLPNPFSV).

This is an uncharacterized protein from Acidianus convivator (ATV).